Consider the following 249-residue polypeptide: tRNA (guanine-N(1)-)-methyltransferase (249 aa).

Residues glycine 113 and 133–138 (IGDYVL) contribute to the S-adenosyl-L-methionine site.

It belongs to the RNA methyltransferase TrmD family. As to quaternary structure, homodimer.

Its subcellular location is the cytoplasm. The enzyme catalyses guanosine(37) in tRNA + S-adenosyl-L-methionine = N(1)-methylguanosine(37) in tRNA + S-adenosyl-L-homocysteine + H(+). Functionally, specifically methylates guanosine-37 in various tRNAs. The polypeptide is tRNA (guanine-N(1)-)-methyltransferase (Aeromonas salmonicida (strain A449)).